The following is a 265-amino-acid chain: Apolipoprotein A-I (265 aa).

Residues 1–16 form the signal peptide; it reads MKAAVLIWLFLMGSQA. A run of 2 repeats spans residues 66 to 87 and 88 to 109. The 10 X approximate tandem repeats stretch occupies residues 66-265; that stretch reads LKLLDNWDSL…EEYTKKLSSQ (200 aa). Methionine 108 is modified (methionine sulfoxide). A 3; half-length repeat occupies 110-120; the sequence is KDLEEVKAQVQ. 5 repeat units span residues 121 to 142, 143 to 164, 165 to 186, 187 to 208, and 209 to 230. A Methionine sulfoxide modification is found at methionine 134. One copy of the 9; half-length repeat lies at 231 to 241; that stretch reads PALDDLRQGLL. Copy 10 of the repeat occupies 242-265; sequence PVLESFKVSFLSALEEYTKKLSSQ.

It belongs to the apolipoprotein A1/A4/E family. As to quaternary structure, homodimer. Interacts with APOA1BP and CLU. Component of a sperm activating protein complex (SPAP), consisting of APOA1, an immunoglobulin heavy chain, an immunoglobulin light chain and albumin. Interacts with NDRG1. Interacts with SCGB3A2. Interacts with NAXE and YJEFN3. Post-translationally, glycosylated. Palmitoylated. In terms of processing, phosphorylation sites are present in the extracellular medium.

The protein localises to the secreted. Its function is as follows. Participates in the reverse transport of cholesterol from tissues to the liver for excretion by promoting cholesterol efflux from tissues and by acting as a cofactor for the lecithin cholesterol acyltransferase (LCAT). As part of the SPAP complex, activates spermatozoa motility. The chain is Apolipoprotein A-I (APOA1) from Aotus nancymaae (Ma's night monkey).